Reading from the N-terminus, the 293-residue chain is Glycine--tRNA ligase alpha subunit (293 aa).

This sequence belongs to the class-II aminoacyl-tRNA synthetase family. As to quaternary structure, tetramer of two alpha and two beta subunits.

The protein resides in the cytoplasm. It carries out the reaction tRNA(Gly) + glycine + ATP = glycyl-tRNA(Gly) + AMP + diphosphate. This is Glycine--tRNA ligase alpha subunit from Wolinella succinogenes (strain ATCC 29543 / DSM 1740 / CCUG 13145 / JCM 31913 / LMG 7466 / NCTC 11488 / FDC 602W) (Vibrio succinogenes).